Here is a 564-residue protein sequence, read N- to C-terminus: Protein CPR-5 (564 aa).

The interval 1–87 (MEALLLPPSP…TSNSNSTKRV (87 aa)) is disordered. Polar residues predominate over residues 12-28 (PQNQITNPANSKPNHQS). Basic and acidic residues predominate over residues 29–38 (GDVHKDETMM). Over residues 69 to 84 (SSSYCSTSSTSNSNST) the composition is skewed to low complexity. 5 helical membrane passes run 347 to 367 (IMDWLLVSVFSMLASMVLGVY), 411 to 431 (VRVWVQIFFGVLMIIVFTYFL), 443 to 463 (PISFIVLFLGIFCGVSGKLCV), 472 to 492 (LWLIVWEVFCLLQFVANVFTL), and 526 to 546 (VYVVILFVLPVINGLLPFATF).

As to quaternary structure, interacts with SIM and SMR1. Ubiquitous.

The protein resides in the membrane. Its subcellular location is the nucleus membrane. May play a role in transcriptional processes. Negatively regulates the senescence and chlorotic lesions induced by biotic (e.g. pathogens) and abiotic (e.g. sugars, darkness) agents, probably by controlling programmed cell death (pcd). Negative regulator of plant programmed cell death (PCD) and effector-triggered immunity (ETI). Promotes cell division and endoreduplication (e.g. in trichomes). This is Protein CPR-5 from Arabidopsis thaliana (Mouse-ear cress).